The sequence spans 534 residues: GMP synthase [glutamine-hydrolyzing] (534 aa).

A Glutamine amidotransferase type-1 domain is found at 20 to 210 (MLIILDFGSQ…VYHICDCEPT (191 aa)). Residue cysteine 97 is the Nucleophile of the active site. Active-site residues include histidine 184 and glutamate 186. The GMPS ATP-PPase domain occupies 211-409 (WTTETFVEEA…LGLPEEIVKR (199 aa)). Position 238-244 (238-244 (SGGVDSS)) interacts with ATP.

As to quaternary structure, homodimer.

The enzyme catalyses XMP + L-glutamine + ATP + H2O = GMP + L-glutamate + AMP + diphosphate + 2 H(+). It participates in purine metabolism; GMP biosynthesis; GMP from XMP (L-Gln route): step 1/1. Its function is as follows. Catalyzes the synthesis of GMP from XMP. In Synechococcus sp. (strain ATCC 27144 / PCC 6301 / SAUG 1402/1) (Anacystis nidulans), this protein is GMP synthase [glutamine-hydrolyzing].